Reading from the N-terminus, the 309-residue chain is DDRGK domain-containing protein 1 (309 aa).

Topologically, residues 1 to 2 (MD) are lumenal. The helical transmembrane segment at 3–23 (LIILVGIASALLVVILTIFFL) threads the bilayer. The Cytoplasmic segment spans residues 24–309 (QKKKGGTEAK…VSAGAGEGSS (286 aa)). A disordered region spans residues 30-178 (TEAKEAAAPP…RLVKEERERK (149 aa)). Residues 53–84 (RRAQIARNQRNRLRQNAPAAAPAAAAALQAAD) show a composition bias toward low complexity. A compositionally biased stretch (acidic residues) spans 85-95 (AEGDNDDENPD). Residues 107 to 178 (LDEKMGAKKR…RLVKEERERK (72 aa)) show a composition bias toward basic and acidic residues.

It belongs to the DDRGK1 family. In terms of assembly, interacts with Atg9; the interaction is transient.

Its subcellular location is the endoplasmic reticulum membrane. Substrate adapter for ufmylation, the covalent attachment of the ubiquitin-like modifier UFM1 to substrate proteins. Required for ufmylation of Atg9; protects the nervous system during aging, possibly by stabilizing Atg9 and supporting its function. This chain is DDRGK domain-containing protein 1, found in Drosophila persimilis (Fruit fly).